The following is a 642-amino-acid chain: Glutamyl-tRNA(Gln) amidotransferase subunit E (642 aa).

It belongs to the GatB/GatE family. GatE subfamily. In terms of assembly, heterodimer of GatD and GatE.

The enzyme catalyses L-glutamyl-tRNA(Gln) + L-glutamine + ATP + H2O = L-glutaminyl-tRNA(Gln) + L-glutamate + ADP + phosphate + H(+). Its function is as follows. Allows the formation of correctly charged Gln-tRNA(Gln) through the transamidation of misacylated Glu-tRNA(Gln) in organisms which lack glutaminyl-tRNA synthetase. The reaction takes place in the presence of glutamine and ATP through an activated gamma-phospho-Glu-tRNA(Gln). The GatDE system is specific for glutamate and does not act on aspartate. This Aeropyrum pernix (strain ATCC 700893 / DSM 11879 / JCM 9820 / NBRC 100138 / K1) protein is Glutamyl-tRNA(Gln) amidotransferase subunit E.